A 244-amino-acid polypeptide reads, in one-letter code: 5-oxoprolinase subunit A (244 aa).

The protein belongs to the LamB/PxpA family. As to quaternary structure, forms a complex composed of PxpA, PxpB and PxpC.

The catalysed reaction is 5-oxo-L-proline + ATP + 2 H2O = L-glutamate + ADP + phosphate + H(+). Catalyzes the cleavage of 5-oxoproline to form L-glutamate coupled to the hydrolysis of ATP to ADP and inorganic phosphate. The chain is 5-oxoprolinase subunit A from Shigella flexneri serotype 5b (strain 8401).